The chain runs to 593 residues: UvrABC system protein C (593 aa).

Residues 17–94 (MEPGCYLMKD…IKQYQPRYNI (78 aa)) enclose the GIY-YIG domain. Residues 199 to 234 (KTILKSLEERMLTASESLDFERAKEYRDLIQHIQNL) enclose the UVR domain.

It belongs to the UvrC family. In terms of assembly, interacts with UvrB in an incision complex.

The protein localises to the cytoplasm. In terms of biological role, the UvrABC repair system catalyzes the recognition and processing of DNA lesions. UvrC both incises the 5' and 3' sides of the lesion. The N-terminal half is responsible for the 3' incision and the C-terminal half is responsible for the 5' incision. This Staphylococcus aureus (strain MSSA476) protein is UvrABC system protein C.